Reading from the N-terminus, the 300-residue chain is MNQTYGRLVSRASIAATAMASALLLIKIFAWWYTGSVSILAALVDSLVDIAASLTNLLVVRYSLQPADDEHTFGHGKAESLAALAQSMFISGSALFLFLTSIQNLIKPTPMNDPGVGIGVTVIALICTIILVTFQRWVVRKTQSQAVRADMLHYQSDVMMNGAILIALGLSWYGWHRADALFALGIGIYILYSALRMGYEAVQSLLDRALPDAERQEIIDIVTSWPGVSGAHDLRTRQSGPTRFIQIHLEMEDNLPLVQAHFVADQVEQAILQRFPGSDVIIHQDPCSVVPREGRKFELV.

A helical transmembrane segment spans residues 24–44 (LLIKIFAWWYTGSVSILAALV). Zn(2+) is bound by residues Asp-45 and Asp-49. A run of 2 helical transmembrane segments spans residues 82-102 (AALAQSMFISGSALFLFLTSI) and 114-134 (PGVGIGVTVIALICTIILVTF). Zn(2+) is bound by residues His-153 and Asp-157. 2 helical membrane passes run 156–176 (SDVMMNGAILIALGLSWYGWH) and 178–198 (ADALFALGIGIYILYSALRMG).

This sequence belongs to the cation diffusion facilitator (CDF) transporter (TC 2.A.4) family. FieF subfamily. In terms of assembly, homodimer.

It is found in the cell inner membrane. It carries out the reaction Zn(2+)(in) + H(+)(out) = Zn(2+)(out) + H(+)(in). The enzyme catalyses Cd(2+)(in) + H(+)(out) = Cd(2+)(out) + H(+)(in). It catalyses the reaction Fe(2+)(in) + H(+)(out) = Fe(2+)(out) + H(+)(in). Functionally, divalent metal cation transporter which exports Zn(2+), Cd(2+) and possibly Fe(2+). May be involved in zinc and iron detoxification by efflux. This is Cation-efflux pump FieF from Salmonella choleraesuis (strain SC-B67).